The primary structure comprises 753 residues: 5-methyltetrahydropteroyltriglutamate--homocysteine methyltransferase (753 aa).

5-methyltetrahydropteroyltri-L-glutamate is bound by residues arginine 17 to lysine 20 and lysine 117. L-homocysteine contacts are provided by residues isoleucine 431–serine 433 and glutamate 484. L-methionine-binding positions include isoleucine 431–serine 433 and glutamate 484. 5-methyltetrahydropteroyltri-L-glutamate is bound by residues arginine 515–cysteine 516 and tryptophan 561. An L-homocysteine-binding site is contributed by aspartate 599. Aspartate 599 contributes to the L-methionine binding site. Glutamate 605 lines the 5-methyltetrahydropteroyltri-L-glutamate pocket. Residues histidine 641, cysteine 643, and glutamate 665 each contribute to the Zn(2+) site. Histidine 694 functions as the Proton donor in the catalytic mechanism. Cysteine 726 contributes to the Zn(2+) binding site.

It belongs to the vitamin-B12 independent methionine synthase family. It depends on Zn(2+) as a cofactor.

It carries out the reaction 5-methyltetrahydropteroyltri-L-glutamate + L-homocysteine = tetrahydropteroyltri-L-glutamate + L-methionine. The protein operates within amino-acid biosynthesis; L-methionine biosynthesis via de novo pathway; L-methionine from L-homocysteine (MetE route): step 1/1. Functionally, catalyzes the transfer of a methyl group from 5-methyltetrahydrofolate to homocysteine resulting in methionine formation. The sequence is that of 5-methyltetrahydropteroyltriglutamate--homocysteine methyltransferase from Shigella dysenteriae serotype 1 (strain Sd197).